The following is a 207-amino-acid chain: Small ribosomal subunit protein uS4 (207 aa).

The segment at 35–54 (RPKPPGPQLGRPRRLSDRGQ) is disordered. In terms of domain architecture, S4 RNA-binding spans 97–163 (RRLDNVLFRL…AYFKTLAENI (67 aa)).

The protein belongs to the universal ribosomal protein uS4 family. Part of the 30S ribosomal subunit. Contacts protein S5. The interaction surface between S4 and S5 is involved in control of translational fidelity.

Functionally, one of the primary rRNA binding proteins, it binds directly to 16S rRNA where it nucleates assembly of the body of the 30S subunit. In terms of biological role, with S5 and S12 plays an important role in translational accuracy. The chain is Small ribosomal subunit protein uS4 from Dehalococcoides mccartyi (strain CBDB1).